An 860-amino-acid chain; its full sequence is MKSSEIRQAFLNYFVQRGHQIVASSSLVPSNDPTLLFTNAGMVQFKDLFLGLETRSYQRAATAQRCVRAGGKHNDLENVGYTARHHTFFEMLGNFSFGDYFKREAIQYAWEFLTEVLHIPAERLWVTVYKEDLEAEDIWLKEMKVSPERFSRCGEKDNFWSMGDTGPCGPCTEIFYDHGPEVAGGPPGSPDEDGDRYIEIWNLVFMQFNRDREGHLHLLPKPSVDTGMGLERLAAVIQGVHSNYEIDSFQYLIKAIAQLGQNIDLNHTSLKVIADHIRSCSFLIVDGVLPSNEGRGYVLRRIIRRAVRHGNKLGLPSPFFFKLVQPLIDVMGDAYPELINSKAHIERILQQEENQFTRTLEQGLRLLQDHIKNLKGQELSGEVAFKLYDTYGFPIDLTADIIREQGLHIDMEAFNQLMQQQREQSQAASQFTTDYHAVSQLDHQSEFHGYEKESMEAKIIGLLQEGNEVKSINKGAKGAVILDHTPFYAESGGQVGDKGLLIGKNCSFQVDDTQKVGQAVVHYGEVIKGELTLDLSIHAQVDHIRRDAIRLNHTATHLLHAALKKIVGQHVQQRGSLVDAERARFDFSHFEALNPQQIQQIEEVVNAQIRANNEVITQVMDIESAKQSGAVALFGEKYSDAVRVLSMGDFSKELCGGTHARRTGDIGLFKIVAEYGIASGIRRIEMVTGRYALAWVNEQLGFMNNLAATLKTTPNSLQEKISQLLLDNKNQEKMIAKLLSEKAQKSGADILGEIEEIKGINLLIKQLEGMDSQTMRHTMDQLKSRIDSAVIILFTIEQNKMNVIAGVSKNIIGKTPSAAQLVRHLCGKGGGRDDMAQGGGNVPEDLNSKIKEIREMIEKI.

Residues histidine 553, histidine 557, cysteine 655, and histidine 659 each contribute to the Zn(2+) site.

Belongs to the class-II aminoacyl-tRNA synthetase family. The cofactor is Zn(2+).

The protein localises to the cytoplasm. It carries out the reaction tRNA(Ala) + L-alanine + ATP = L-alanyl-tRNA(Ala) + AMP + diphosphate. Functionally, catalyzes the attachment of alanine to tRNA(Ala) in a two-step reaction: alanine is first activated by ATP to form Ala-AMP and then transferred to the acceptor end of tRNA(Ala). Also edits incorrectly charged Ser-tRNA(Ala) and Gly-tRNA(Ala) via its editing domain. The sequence is that of Alanine--tRNA ligase from Legionella pneumophila (strain Paris).